The primary structure comprises 155 residues: 3-dehydroquinate dehydratase 1 (155 aa).

The active-site Proton acceptor is Tyr28. Substrate contacts are provided by Asn80, His86, and Asp93. The Proton donor role is filled by His106. Substrate-binding positions include 107–108 and Arg117; that span reads VT.

Belongs to the type-II 3-dehydroquinase family. In terms of assembly, homododecamer.

It catalyses the reaction 3-dehydroquinate = 3-dehydroshikimate + H2O. The protein operates within metabolic intermediate biosynthesis; chorismate biosynthesis; chorismate from D-erythrose 4-phosphate and phosphoenolpyruvate: step 3/7. Its function is as follows. Catalyzes a trans-dehydration via an enolate intermediate. The protein is 3-dehydroquinate dehydratase 1 (aroQ1) of Bradyrhizobium diazoefficiens (strain JCM 10833 / BCRC 13528 / IAM 13628 / NBRC 14792 / USDA 110).